A 332-amino-acid polypeptide reads, in one-letter code: Fructose-1,6-bisphosphatase class 1 (332 aa).

Residues Glu91, Asp112, Leu114, and Asp115 each contribute to the Mg(2+) site. Substrate contacts are provided by residues 115–118, Asn208, Tyr241, and Lys271; that span reads DGSS. A Mg(2+)-binding site is contributed by Glu277.

Belongs to the FBPase class 1 family. Homotetramer. Mg(2+) serves as cofactor.

It localises to the cytoplasm. It catalyses the reaction beta-D-fructose 1,6-bisphosphate + H2O = beta-D-fructose 6-phosphate + phosphate. It functions in the pathway carbohydrate biosynthesis; Calvin cycle. This chain is Fructose-1,6-bisphosphatase class 1, found in Chlorobium phaeobacteroides (strain DSM 266 / SMG 266 / 2430).